The primary structure comprises 488 residues: DELTA-alicitoxin-Pse2b (488 aa).

A signal peptide spans 1–21 (MSKPIIFLLTAFVVLTDLGAT). One can recognise an MACPF domain in the interval 24–344 (TEKVEVKAKP…GYLNFDCAYE (321 aa)). The EGF-like domain maps to 369–398 (VCKLGPEGCHSDDDCESDDLIYCACCGDSC). Cystine bridges form between C370-C383, C377-C391, and C393-C398.

The protein resides in the secreted. Its subcellular location is the nematocyst. In terms of biological role, causes lethal toxicity to the shrimp Palaemon paucidence, and hemolytic activity toward sheep red blood cells. In Phyllodiscus semoni (Night anemone), this protein is DELTA-alicitoxin-Pse2b.